Consider the following 341-residue polypeptide: L-threonine 3-dehydrogenase (341 aa).

Cys38 contacts Zn(2+). Residues Thr40 and His43 each act as charge relay system in the active site. Zn(2+) contacts are provided by His63, Glu64, Cys93, Cys96, Cys99, and Cys107. NAD(+)-binding positions include Ile175, Asp195, Arg200, 262–264, and 286–287; these read LGI and IY.

This sequence belongs to the zinc-containing alcohol dehydrogenase family. In terms of assembly, homotetramer. Requires Zn(2+) as cofactor.

It is found in the cytoplasm. It catalyses the reaction L-threonine + NAD(+) = (2S)-2-amino-3-oxobutanoate + NADH + H(+). It functions in the pathway amino-acid degradation; L-threonine degradation via oxydo-reductase pathway; glycine from L-threonine: step 1/2. In terms of biological role, catalyzes the NAD(+)-dependent oxidation of L-threonine to 2-amino-3-ketobutyrate. The protein is L-threonine 3-dehydrogenase of Klebsiella pneumoniae (strain 342).